A 289-amino-acid chain; its full sequence is Glucosamine-6-phosphate deaminase 1 (289 aa).

Lys64 carries the N6-acetyllysine modification. Asp72 acts as the Proton acceptor; for enolization step in catalysis. Asp141 serves as the catalytic For ring-opening step. The active-site Proton acceptor; for ring-opening step is the His143. Glu148 (for ring-opening step) is an active-site residue. At Thr161 the chain carries Phosphothreonine.

The protein belongs to the glucosamine/galactosamine-6-phosphate isomerase family. In terms of assembly, homohexamer. At the equatorial segment of the sperm head.

The protein localises to the cytoplasm. The enzyme catalyses alpha-D-glucosamine 6-phosphate + H2O = beta-D-fructose 6-phosphate + NH4(+). Its pathway is nucleotide-sugar biosynthesis; UDP-N-acetyl-alpha-D-glucosamine biosynthesis; alpha-D-glucosamine 6-phosphate from D-fructose 6-phosphate: step 1/1. Its activity is regulated as follows. Allosterically activated by N-acetylglucosamine-6-phosphate (GlcNAc6P). In terms of biological role, catalyzes the reversible conversion of alpha-D-glucosamine 6-phosphate (GlcN-6P) into beta-D-fructose 6-phosphate (Fru-6P) and ammonium ion, a regulatory reaction step in de novo uridine diphosphate-N-acetyl-alpha-D-glucosamine (UDP-GlcNAc) biosynthesis via hexosamine pathway. Deamination is coupled to aldo-keto isomerization mediating the metabolic flux from UDP-GlcNAc toward Fru-6P. At high ammonium level can drive amination and isomerization of Fru-6P toward hexosamines and UDP-GlcNAc synthesis. Has a role in fine tuning the metabolic fluctuations of cytosolic UDP-GlcNAc and their effects on hyaluronan synthesis that occur during tissue remodeling. Seems to trigger calcium oscillations in mammalian eggs. These oscillations serve as the essential trigger for egg activation and early development of the embryo. This chain is Glucosamine-6-phosphate deaminase 1, found in Mesocricetus auratus (Golden hamster).